The following is a 507-amino-acid chain: ATP synthase subunit alpha, chloroplastic (507 aa).

Residue 170–177 (GDRQTGKT) participates in ATP binding.

Belongs to the ATPase alpha/beta chains family. In terms of assembly, F-type ATPases have 2 components, CF(1) - the catalytic core - and CF(0) - the membrane proton channel. CF(1) has five subunits: alpha(3), beta(3), gamma(1), delta(1), epsilon(1). CF(0) has four main subunits: a, b, b' and c.

It localises to the plastid. The protein resides in the chloroplast thylakoid membrane. It carries out the reaction ATP + H2O + 4 H(+)(in) = ADP + phosphate + 5 H(+)(out). Its function is as follows. Produces ATP from ADP in the presence of a proton gradient across the membrane. The alpha chain is a regulatory subunit. This chain is ATP synthase subunit alpha, chloroplastic, found in Acorus calamus var. americanus (American sweet flag).